A 760-amino-acid polypeptide reads, in one-letter code: Prolyl endopeptidase FAP (760 aa).

Topologically, residues M1–W4 are cytoplasmic. A helical; Signal-anchor for type II membrane protein membrane pass occupies residues V5–V25. Residues L26 to D760 lie on the Extracellular side of the membrane. N-linked (GlcNAc...) asparagine glycosylation is found at N49, N92, and N99. Substrate-binding residues include E203 and E204. 2 N-linked (GlcNAc...) asparagine glycosylation sites follow: N227 and N314. 3 disulfides stabilise this stretch: C321-C332, C438-C441, and C448-C466. The Charge relay system role is filled by S624. A disulfide bond links C643 and C755. N679 is a glycosylation site (N-linked (GlcNAc...) asparagine). Catalysis depends on charge relay system residues D702 and H734.

The protein belongs to the peptidase S9B family. As to quaternary structure, homodimer; homodimerization is required for activity of both plasma membrane and soluble forms. The monomer is inactive. Heterodimer with DPP4. Interacts with PLAUR; the interaction occurs at the cell surface of invadopodia membranes. Interacts with ITGB1. Interacts with ITGA3. Associates with integrin alpha-3/beta-1; the association occurs in a collagen-dependent manner at the cell surface of invadopodia membranes. In terms of processing, N-glycosylated. The N-terminus may be blocked. In terms of tissue distribution, expressed in adipose tissue. Expressed in the dermal fibroblasts in the fetal skin. Expressed in the granulation tissue of healing wounds and on reactive stromal fibroblast in epithelial cancers. Expressed in activated fibroblast-like synoviocytes from inflamed synovial tissues. Expressed in activated hepatic stellate cells (HSC) and myofibroblasts from cirrhotic liver, but not detected in normal liver. Expressed in glioma cells (at protein level). Expressed in glioblastomas and glioma cells. Isoform 1 and isoform 2 are expressed in melanoma, carcinoma and fibroblast cell lines.

It localises to the cell surface. The protein resides in the cell membrane. Its subcellular location is the cell projection. It is found in the lamellipodium membrane. The protein localises to the invadopodium membrane. It localises to the ruffle membrane. The protein resides in the membrane. Its subcellular location is the secreted. It is found in the cytoplasm. The enzyme catalyses Hydrolysis of Pro-|-Xaa &gt;&gt; Ala-|-Xaa in oligopeptides.. It catalyses the reaction Release of an N-terminal dipeptide, Xaa-Yaa-|-Zaa-, from a polypeptide, preferentially when Yaa is Pro, provided Zaa is neither Pro nor hydroxyproline.. Gelatinase activity is inhibited by serine-protease inhibitors, such as phenylmethylsulfonyl fluoride (PMSF), 4-(2-aminoethyl)-benzenesulfonyl fluoride hydrochloride (AEBSF), 4-amidino phenylsulfonyl fluoride (APSF) and diisopropyl fluorophosphate (DFP), N-ethylmaleimide (NEM) and phenylmethylsulfonyl fluoride (PMSF). Dipeptidyl peptidase activity is inhibited by 2,2'-azino-bis(3-ethylbenzthiazoline-6-sulfonic acid), diisopropylfluorophosphate (DFP). Prolyl endopeptidase activity is inhibited by the boronic acid peptide Ac-Gly-BoroPro, Ac-Gly-Pro-chloromethyl ketone and Thr-Ser-Gly-chloromethyl ketone. In terms of biological role, cell surface glycoprotein serine protease that participates in extracellular matrix degradation and involved in many cellular processes including tissue remodeling, fibrosis, wound healing, inflammation and tumor growth. Both plasma membrane and soluble forms exhibit post-proline cleaving endopeptidase activity, with a marked preference for Ala/Ser-Gly-Pro-Ser/Asn/Ala consensus sequences, on substrate such as alpha-2-antiplasmin SERPINF2 and SPRY2. Degrade also gelatin, heat-denatured type I collagen, but not native collagen type I and IV, vitronectin, tenascin, laminin, fibronectin, fibrin or casein. Also has dipeptidyl peptidase activity, exhibiting the ability to hydrolyze the prolyl bond two residues from the N-terminus of synthetic dipeptide substrates provided that the penultimate residue is proline, with a preference for Ala-Pro, Ile-Pro, Gly-Pro, Arg-Pro and Pro-Pro. Natural neuropeptide hormones for dipeptidyl peptidase are the neuropeptide Y (NPY), peptide YY (PYY), substance P (TAC1) and brain natriuretic peptide 32 (NPPB). The plasma membrane form, in association with either DPP4, PLAUR or integrins, is involved in the pericellular proteolysis of the extracellular matrix (ECM), and hence promotes cell adhesion, migration and invasion through the ECM. Plays a role in tissue remodeling during development and wound healing. Participates in the cell invasiveness towards the ECM in malignant melanoma cancers. Enhances tumor growth progression by increasing angiogenesis, collagen fiber degradation and apoptosis and by reducing antitumor response of the immune system. Promotes glioma cell invasion through the brain parenchyma by degrading the proteoglycan brevican. Acts as a tumor suppressor in melanocytic cells through regulation of cell proliferation and survival in a serine protease activity-independent manner. The polypeptide is Prolyl endopeptidase FAP (Homo sapiens (Human)).